The primary structure comprises 350 residues: Twinfilin-1 (350 aa).

S2 is modified (N-acetylserine). The ADF-H 1 domain occupies 2 to 139; that stretch reads SHRTGIQASE…SLHGYKKYLL (138 aa). Phosphoserine is present on residues S143 and S277. The ADF-H 2 domain occupies 175–313; the sequence is LQGVAFPISR…TADFLYEEVH (139 aa). At Y309 the chain carries Phosphotyrosine. Residues 316–350 are disordered; the sequence is QHAHKQSFAKPKGPAGKRGIRRLIRGPAETEATTD. A Phosphothreonine modification is found at T349.

It belongs to the actin-binding proteins ADF family. Twinfilin subfamily. Interacts with G-actin; ADP-actin form and capping protein (CP). May also be able to interact with TWF2 and phosphoinositides, PI(4,5)P2. When bound to PI(4,5)P2, it is down-regulated. Interacts with ACTG1. Post-translationally, phosphorylated on serine and threonine residues.

It is found in the cytoplasm. Its subcellular location is the cytoskeleton. Functionally, actin-binding protein involved in motile and morphological processes. Inhibits actin polymerization, likely by sequestering G-actin. By capping the barbed ends of filaments, it also regulates motility. Seems to play an important role in clathrin-mediated endocytosis and distribution of endocytic organelles. This is Twinfilin-1 (TWF1) from Pongo abelii (Sumatran orangutan).